A 118-amino-acid chain; its full sequence is DNA mimic protein DMP12 (118 aa).

Belongs to the DMP12-like protein family. Monomer. Interacts with the dimeric form of the DNA-binding protein HU.

Its function is as follows. Acts as a DNA mimic. Interacts with the DNA-binding protein HU and partially prevents the binding of HU protein to DNA by occupying the DNA binding sites on the protein. However, the relatively weak affinity of DMP12 for HU suggests that it may not completely block the HU protein-DNA binding, and that DMP12 is more likely to act as a regulator than a competitive inhibitor. It protects HU protein from limited digestion by trypsin in a limited trypsin digestion assay, suggesting that it may serve to protect the HU protein and improve the stability of unbound HU protein. The chain is DNA mimic protein DMP12 from Neisseria meningitidis serogroup B (strain ATCC BAA-335 / MC58).